The primary structure comprises 140 residues: Nucleoside diphosphate kinase (140 aa).

Lys-11, Phe-59, Arg-87, Thr-93, Arg-104, and Asn-114 together coordinate ATP. The Pros-phosphohistidine intermediate role is filled by His-117.

It belongs to the NDK family. In terms of assembly, homotetramer. The cofactor is Mg(2+).

The protein localises to the cytoplasm. It catalyses the reaction a 2'-deoxyribonucleoside 5'-diphosphate + ATP = a 2'-deoxyribonucleoside 5'-triphosphate + ADP. It carries out the reaction a ribonucleoside 5'-diphosphate + ATP = a ribonucleoside 5'-triphosphate + ADP. Major role in the synthesis of nucleoside triphosphates other than ATP. The ATP gamma phosphate is transferred to the NDP beta phosphate via a ping-pong mechanism, using a phosphorylated active-site intermediate. In Paracoccus denitrificans (strain Pd 1222), this protein is Nucleoside diphosphate kinase.